Reading from the N-terminus, the 306-residue chain is Aspartate carbamoyltransferase catalytic subunit (306 aa).

Residues R55 and T56 each contribute to the carbamoyl phosphate site. An L-aspartate-binding site is contributed by K84. Carbamoyl phosphate-binding residues include R105, H133, and Q136. R166 and R227 together coordinate L-aspartate. L265 and P266 together coordinate carbamoyl phosphate.

This sequence belongs to the aspartate/ornithine carbamoyltransferase superfamily. ATCase family. As to quaternary structure, heterododecamer (2C3:3R2) of six catalytic PyrB chains organized as two trimers (C3), and six regulatory PyrI chains organized as three dimers (R2).

It catalyses the reaction carbamoyl phosphate + L-aspartate = N-carbamoyl-L-aspartate + phosphate + H(+). The protein operates within pyrimidine metabolism; UMP biosynthesis via de novo pathway; (S)-dihydroorotate from bicarbonate: step 2/3. Its function is as follows. Catalyzes the condensation of carbamoyl phosphate and aspartate to form carbamoyl aspartate and inorganic phosphate, the committed step in the de novo pyrimidine nucleotide biosynthesis pathway. This chain is Aspartate carbamoyltransferase catalytic subunit, found in Aeromonas salmonicida (strain A449).